Consider the following 400-residue polypeptide: NAD-dependent protein deacetylase sirtuin-7 (400 aa).

The interval 1-28 (MAAGGLSRSERKAAERVRRLREEQQRER) is disordered. The span at 8–28 (RSERKAAERVRRLREEQQRER) shows a compositional bias: basic and acidic residues. The Deacetylase sirtuin-type domain occupies 82-329 (PEELQRKVRE…QLLMDELGLE (248 aa)). Residues 107–126 (GAGISTAASIPDYRGPNGVW) and 167–170 (QNCD) contribute to the NAD(+) site. The active-site Proton acceptor is the histidine 187. Residues cysteine 195, cysteine 198, cysteine 225, and cysteine 228 each contribute to the Zn(2+) site. NAD(+) contacts are provided by residues 268–270 (GSS), 297–299 (NLQ), and cysteine 315. The disordered stretch occupies residues 354–380 (SHSRKSLCRSREEPGPGDRGAPLSSAP). The residue at position 388 (arginine 388) is an Asymmetric dimethylarginine; alternate. Arginine 388 carries the post-translational modification Omega-N-methylarginine; alternate.

This sequence belongs to the sirtuin family. Class IV subfamily. Interacts with UBTF and the RNA polymerase I complex. Interacts with components of the B-WICH complex, such as MYBBP1A, SMARCA5/SNF2H and BAZ1B/WSTF. Interacts with ELK4, leading to stabilization at target promoters for H3K18Ac deacetylation. Interacts with histone H2A and/or histone H2B. Interacts with DNMT1. Interacts with SIRT1. It depends on Zn(2+) as a cofactor. Phosphorylated during mitosis. In terms of processing, methylation at Arg-388 by PRMT6 inhibits the H3K18Ac histone deacetylase activity, promoting mitochondria biogenesis and maintaining mitochondria respiration. Post-translationally, ubiquitinated via 'Lys-63'-linked ubiquitin chains. Deubiquitinated by USP7, inhibiting the H3K18Ac histone deacetylase activity and regulating gluconeogenesis. Ubiquitinated by E3 ubiquitin-protein ligase complex containing FBXO7; leading to proteasomal degradation.

The protein localises to the nucleus. The protein resides in the nucleolus. It is found in the nucleoplasm. Its subcellular location is the chromosome. It localises to the cytoplasm. It catalyses the reaction N(6)-acetyl-L-lysyl-[protein] + NAD(+) + H2O = 2''-O-acetyl-ADP-D-ribose + nicotinamide + L-lysyl-[protein]. It carries out the reaction N(6)-glutaryl-L-lysyl-[protein] + NAD(+) + H2O = 2''-O-glutaryl-ADP-D-ribose + nicotinamide + L-lysyl-[protein]. The catalysed reaction is N(6)-succinyl-L-lysyl-[protein] + NAD(+) + H2O = 2''-O-succinyl-ADP-D-ribose + nicotinamide + L-lysyl-[protein]. The enzyme catalyses N(6)-propanoyl-L-lysyl-[protein] + NAD(+) + H2O = 3''-O-propanoyl-ADP-D-ribose + nicotinamide + L-lysyl-[protein]. It catalyses the reaction N(6)-decanoyl-L-lysyl-[protein] + NAD(+) + H2O = 2''-O-decanoyl-ADP-D-ribose + nicotinamide + L-lysyl-[protein]. Its activity is regulated as follows. NAD-dependent protein-lysine deacetylase and deacylase activities are activated by nucleic acids. Histone deacetylase activity is activated by DNA. Protein-lysine deacylase activity is activated by RNA. H3K18Ac histone deacetylase activity is inhibited by methylation at Arg-388. H3K18Ac histone deacetylase activity is inhibited by deubiquitination by USP7. Its function is as follows. NAD-dependent protein-lysine deacylase that can act both as a deacetylase or deacylase (desuccinylase, depropionylase, deglutarylase and dedecanoylase), depending on the context. Specifically mediates deacetylation of histone H3 at 'Lys-18' (H3K18Ac). In contrast to other histone deacetylases, displays strong preference for a specific histone mark, H3K18Ac, directly linked to control of gene expression. H3K18Ac is mainly present around the transcription start site of genes and has been linked to activation of nuclear hormone receptors; SIRT7 thereby acts as a transcription repressor. Moreover, H3K18 hypoacetylation has been reported as a marker of malignancy in various cancers and seems to maintain the transformed phenotype of cancer cells. Also able to mediate deacetylation of histone H3 at 'Lys-36' (H3K36Ac) in the context of nucleosomes. Also mediates deacetylation of non-histone proteins, such as ATM, CDK9, DDX21, DDB1, FBL, FKBP5/FKBP51, GABPB1, RAN, RRP9/U3-55K and POLR1E/PAF53. Enriched in nucleolus where it stimulates transcription activity of the RNA polymerase I complex. Acts by mediating the deacetylation of the RNA polymerase I subunit POLR1E/PAF53, thereby promoting the association of RNA polymerase I with the rDNA promoter region and coding region. In response to metabolic stress, SIRT7 is released from nucleoli leading to hyperacetylation of POLR1E/PAF53 and decreased RNA polymerase I transcription. Required to restore the transcription of ribosomal RNA (rRNA) at the exit from mitosis. Promotes pre-ribosomal RNA (pre-rRNA) cleavage at the 5'-terminal processing site by mediating deacetylation of RRP9/U3-55K, a core subunit of the U3 snoRNP complex. Mediates 'Lys-37' deacetylation of Ran, thereby regulating the nuclear export of NF-kappa-B subunit RELA/p65. Acts as a regulator of DNA damage repair by mediating deacetylation of ATM during the late stages of DNA damage response, promoting ATM dephosphorylation and deactivation. Suppresses the activity of the DCX (DDB1-CUL4-X-box) E3 ubiquitin-protein ligase complexes by mediating deacetylation of DDB1, which prevents the interaction between DDB1 and CUL4 (CUL4A or CUL4B). Activates RNA polymerase II transcription by mediating deacetylation of CDK9, thereby promoting 'Ser-2' phosphorylation of the C-terminal domain (CTD) of RNA polymerase II. Deacetylates FBL, promoting histone-glutamine methyltransferase activity of FBL. Acts as a regulator of mitochondrial function by catalyzing deacetylation of GABPB1. Regulates Akt/AKT1 activity by mediating deacetylation of FKBP5/FKBP51. Required to prevent R-loop-associated DNA damage and transcription-associated genomic instability by mediating deacetylation and subsequent activation of DDX21, thereby overcoming R-loop-mediated stalling of RNA polymerases. In addition to protein deacetylase activity, also acts as a protein-lysine deacylase. Acts as a protein depropionylase by mediating depropionylation of Osterix (SP7), thereby regulating bone formation by osteoblasts. Acts as a histone deglutarylase by mediating deglutarylation of histone H4 on 'Lys-91' (H4K91glu); a mark that destabilizes nucleosomes by promoting dissociation of the H2A-H2B dimers from nucleosomes. Acts as a histone desuccinylase: in response to DNA damage, recruited to DNA double-strand breaks (DSBs) and catalyzes desuccinylation of histone H3 on 'Lys-122' (H3K122succ), thereby promoting chromatin condensation and DSB repair. Also promotes DSB repair by promoting H3K18Ac deacetylation, regulating non-homologous end joining (NHEJ). Along with its role in DNA repair, required for chromosome synapsis during prophase I of female meiosis by catalyzing H3K18Ac deacetylation. Involved in transcriptional repression of LINE-1 retrotransposon via H3K18Ac deacetylation, and promotes their association with the nuclear lamina. Required to stabilize ribosomal DNA (rDNA) heterochromatin and prevent cellular senescence induced by rDNA instability. Acts as a negative regulator of SIRT1 by preventing autodeacetylation of SIRT1, restricting SIRT1 deacetylase activity. The protein is NAD-dependent protein deacetylase sirtuin-7 (SIRT7) of Bos taurus (Bovine).